The chain runs to 618 residues: UvrABC system protein C (618 aa).

Residues 13-92 (DKPGVYLMKN…IKKYRPKYNI (80 aa)) enclose the GIY-YIG domain. The region spanning 204–239 (LDIVENFKLNMEKAAENLEFEKAAMLRDKINIIEKI) is the UVR domain.

The protein belongs to the UvrC family. As to quaternary structure, interacts with UvrB in an incision complex.

The protein localises to the cytoplasm. Functionally, the UvrABC repair system catalyzes the recognition and processing of DNA lesions. UvrC both incises the 5' and 3' sides of the lesion. The N-terminal half is responsible for the 3' incision and the C-terminal half is responsible for the 5' incision. The protein is UvrABC system protein C of Clostridium botulinum (strain Kyoto / Type A2).